Reading from the N-terminus, the 272-residue chain is Ribonuclease 3 (272 aa).

Positions 1 to 22 (MSLQFLRSEASDGAGETSDASS) are disordered. An RNase III domain is found at 31 to 162 (TATHLARLTG…LVGAIYLDQG (132 aa)). Glu-75 provides a ligand contact to Mg(2+). The active site involves Asp-79. Residues Asp-148 and Glu-151 each contribute to the Mg(2+) site. Residue Glu-151 is part of the active site. Residues 189–258 (NYKSRLIEYT…AKEAMKRLES (70 aa)) form the DRBM domain.

It belongs to the ribonuclease III family. As to quaternary structure, homodimer. Mg(2+) is required as a cofactor.

The protein resides in the cytoplasm. It carries out the reaction Endonucleolytic cleavage to 5'-phosphomonoester.. Digests double-stranded RNA. Involved in the processing of primary rRNA transcript to yield the immediate precursors to the large and small rRNAs (23S and 16S). Processes some mRNAs, and tRNAs when they are encoded in the rRNA operon. Processes pre-crRNA and tracrRNA of type II CRISPR loci if present in the organism. The polypeptide is Ribonuclease 3 (Chlorobaculum tepidum (strain ATCC 49652 / DSM 12025 / NBRC 103806 / TLS) (Chlorobium tepidum)).